The primary structure comprises 874 residues: DNA mismatch repair protein MutS (874 aa).

Positions 1–12 (MSNDRPLTHSEA) are enriched in basic and acidic residues. The tract at residues 1–20 (MSNDRPLTHSEAESSALRLG) is disordered. 661–668 (GPNASGKS) contacts ATP. Residues 854 to 874 (RKSSMGDPPTAPEINQGELPF) are disordered.

It belongs to the DNA mismatch repair MutS family.

Functionally, this protein is involved in the repair of mismatches in DNA. It is possible that it carries out the mismatch recognition step. This protein has a weak ATPase activity. This Thermosynechococcus vestitus (strain NIES-2133 / IAM M-273 / BP-1) protein is DNA mismatch repair protein MutS.